Reading from the N-terminus, the 159-residue chain is Large ribosomal subunit protein uL22 (159 aa).

A disordered region spans residues 129-159 (VEGQQKAKMARQKAVTSVVKAPSKTQGGVQK).

Belongs to the universal ribosomal protein uL22 family. Part of the 50S ribosomal subunit.

Its function is as follows. This protein binds specifically to 23S rRNA; its binding is stimulated by other ribosomal proteins, e.g. L4, L17, and L20. It is important during the early stages of 50S assembly. It makes multiple contacts with different domains of the 23S rRNA in the assembled 50S subunit and ribosome. The globular domain of the protein is located near the polypeptide exit tunnel on the outside of the subunit, while an extended beta-hairpin is found that lines the wall of the exit tunnel in the center of the 70S ribosome. In Mycoplasma pneumoniae (strain ATCC 29342 / M129 / Subtype 1) (Mycoplasmoides pneumoniae), this protein is Large ribosomal subunit protein uL22 (rplV).